The primary structure comprises 246 residues: Serine protease 1 (246 aa).

The N-terminal stretch at 1–17 is a signal peptide; sequence MKTFIFLALLGAAVAFP. The propeptide at 18–23 is activation peptide; that stretch reads VDDDDK. The Peptidase S1 domain occupies 24–244; that stretch reads IVGGYTCGAN…YVSWIKQTIA (221 aa). 6 disulfides stabilise this stretch: Cys-30-Cys-160, Cys-48-Cys-64, Cys-132-Cys-233, Cys-139-Cys-206, Cys-171-Cys-185, and Cys-196-Cys-220. His-63 serves as the catalytic Charge relay system. Ca(2+) is bound by residues Glu-75, Asn-77, Val-80, and Glu-85. The active-site Charge relay system is Asp-107. Substrate contacts are provided by residues 194 to 195, 197 to 198, and Ser-200; these read DS and QG. Ser-200 acts as the Charge relay system in catalysis.

This sequence belongs to the peptidase S1 family. As to quaternary structure, interacts with SERPINA1. Ca(2+) is required as a cofactor. Post-translationally, autocatalytic cleavage after Lys-23 leads to beta-trypsin by releasing a terminal hexapeptide. Subsequent cleavage after Lys-148 leads to alpha-trypsin. Further cleavage after Lys-193 yields pseudotrypsin. A cleavage may also occur after Arg-122. Not sulfated on tyrosine residue(s). In terms of tissue distribution, synthesized in the acinar cells of the pancreas.

Its subcellular location is the secreted. The protein resides in the extracellular space. The catalysed reaction is Preferential cleavage: Arg-|-Xaa, Lys-|-Xaa.. Is inhibited by scorpion cyclotide trypsin inhibitor TopI1. The protein is Serine protease 1 (PRSS1) of Bos taurus (Bovine).